The following is a 148-amino-acid chain: 3-dehydroquinate dehydratase (148 aa).

Tyr23 serves as the catalytic Proton acceptor. Substrate is bound by residues Asn75, His81, and Asp88. His101 acts as the Proton donor in catalysis. Substrate is bound by residues 102–103 (LS) and Arg112.

Belongs to the type-II 3-dehydroquinase family. As to quaternary structure, homododecamer.

It carries out the reaction 3-dehydroquinate = 3-dehydroshikimate + H2O. It functions in the pathway metabolic intermediate biosynthesis; chorismate biosynthesis; chorismate from D-erythrose 4-phosphate and phosphoenolpyruvate: step 3/7. Its function is as follows. Catalyzes a trans-dehydration via an enolate intermediate. The protein is 3-dehydroquinate dehydratase of Xanthomonas campestris pv. campestris (strain B100).